A 104-amino-acid chain; its full sequence is Large ribosomal subunit protein uL24 (104 aa).

Belongs to the universal ribosomal protein uL24 family. In terms of assembly, part of the 50S ribosomal subunit.

In terms of biological role, one of two assembly initiator proteins, it binds directly to the 5'-end of the 23S rRNA, where it nucleates assembly of the 50S subunit. Functionally, one of the proteins that surrounds the polypeptide exit tunnel on the outside of the subunit. The sequence is that of Large ribosomal subunit protein uL24 from Idiomarina loihiensis (strain ATCC BAA-735 / DSM 15497 / L2-TR).